Consider the following 138-residue polypeptide: Putative pre-16S rRNA nuclease (138 aa).

Belongs to the YqgF nuclease family.

The protein localises to the cytoplasm. Functionally, could be a nuclease involved in processing of the 5'-end of pre-16S rRNA. This chain is Putative pre-16S rRNA nuclease, found in Haemophilus ducreyi (strain 35000HP / ATCC 700724).